A 521-amino-acid polypeptide reads, in one-letter code: Type II methyltransferase M.AluI (521 aa).

The 484-residue stretch at 8–491 (YSFVDLFAGI…REHVRRDRAL (484 aa)) folds into the SAM-dependent MTase C5-type domain. Residue Cys84 is part of the active site.

The protein belongs to the class I-like SAM-binding methyltransferase superfamily. C5-methyltransferase family.

It catalyses the reaction a 2'-deoxycytidine in DNA + S-adenosyl-L-methionine = a 5-methyl-2'-deoxycytidine in DNA + S-adenosyl-L-homocysteine + H(+). In terms of biological role, a methylase, recognizes the double-stranded sequence 5'-AGCT-3', methylates C-3 on both strands, and protects the DNA from cleavage by the AluI endonuclease. The chain is Type II methyltransferase M.AluI from Cellulosimicrobium cellulans (Arthrobacter luteus).